We begin with the raw amino-acid sequence, 323 residues long: Ribosomal RNA small subunit methyltransferase H (323 aa).

S-adenosyl-L-methionine-binding positions include 44-46 (AGH), Asp64, Tyr91, Asp112, and Gln119.

This sequence belongs to the methyltransferase superfamily. RsmH family.

It is found in the cytoplasm. It catalyses the reaction cytidine(1402) in 16S rRNA + S-adenosyl-L-methionine = N(4)-methylcytidine(1402) in 16S rRNA + S-adenosyl-L-homocysteine + H(+). Its function is as follows. Specifically methylates the N4 position of cytidine in position 1402 (C1402) of 16S rRNA. In Nitratidesulfovibrio vulgaris (strain ATCC 29579 / DSM 644 / CCUG 34227 / NCIMB 8303 / VKM B-1760 / Hildenborough) (Desulfovibrio vulgaris), this protein is Ribosomal RNA small subunit methyltransferase H.